The chain runs to 56 residues: Putative zinc-binding protein YnfU (56 aa).

Residues C19, C22, C41, and C44 each coordinate Zn(2+).

The cofactor is Zn(2+).

This Escherichia coli (strain K12) protein is Putative zinc-binding protein YnfU.